A 121-amino-acid chain; its full sequence is Cell division protein FtsL (121 aa).

The Cytoplasmic portion of the chain corresponds to 1-34 (MISRVTEALSKVKGSIGSNERHALPGVIGDDLLR). The helical transmembrane segment at 35–57 (FGKLPLCLFICIILTAVTVVTTA) threads the bilayer. The Periplasmic segment spans residues 58 to 121 (HHTRLLTAQR…PSQENIVVQK (64 aa)).

This sequence belongs to the FtsL family. In terms of assembly, part of a complex composed of FtsB, FtsL and FtsQ.

The protein localises to the cell inner membrane. Functionally, essential cell division protein. May link together the upstream cell division proteins, which are predominantly cytoplasmic, with the downstream cell division proteins, which are predominantly periplasmic. The chain is Cell division protein FtsL from Salmonella typhimurium (strain LT2 / SGSC1412 / ATCC 700720).